A 215-amino-acid chain; its full sequence is Thiamine import ATP-binding protein ThiQ (215 aa).

In terms of domain architecture, ABC transporter spans 2–215 (IYLNNVILND…GQISQLQKGV (214 aa)). An ATP-binding site is contributed by 32–39 (GESGAGKS).

This sequence belongs to the ABC transporter superfamily. Thiamine importer (TC 3.A.1.19.1) family. As to quaternary structure, the complex is composed of two ATP-binding proteins (ThiQ), two transmembrane proteins (ThiP) and a solute-binding protein (ThiB).

The protein resides in the cell inner membrane. The enzyme catalyses thiamine(out) + ATP + H2O = thiamine(in) + ADP + phosphate + H(+). Functionally, part of the ABC transporter complex ThiBPQ involved in thiamine import. Responsible for energy coupling to the transport system. The protein is Thiamine import ATP-binding protein ThiQ of Haemophilus influenzae (strain ATCC 51907 / DSM 11121 / KW20 / Rd).